The sequence spans 614 residues: Syringomycin synthase SyrB1 (614 aa).

One can recognise a Carrier domain in the interval lysine 535–leucine 610. Serine 570 carries the O-(pantetheine 4'-phosphoryl)serine modification.

It belongs to the ATP-dependent AMP-binding enzyme family. It depends on pantetheine 4'-phosphate as a cofactor.

It carries out the reaction holo-[peptidyl-carrier protein] + L-threonine + ATP = L-threonyl-[peptidyl-carrier protein] + AMP + diphosphate. Its function is as follows. Involved in the biosynthesis of syringomycin E, a cyclic lipodepsinonapeptide toxin with phytotoxic activity. Specifically adenylates L-threonine and loads it onto its peptidyl carrier domain, via a thioester linkage to the phosphopanthetheine moiety. Is highly specific for L-threonine. This chain is Syringomycin synthase SyrB1, found in Pseudomonas syringae pv. syringae.